A 451-amino-acid polypeptide reads, in one-letter code: uncharacterized protein (451 aa).

Positions 2-60 constitute a TRAM domain; that stretch reads VVKVKQKIPLKIKRMGINGEGIGFYQKTLVFVPGALKGENIFCQITAVKRNFAEAKLLT. 4 residues coordinate [4Fe-4S] cluster: cysteine 73, cysteine 79, cysteine 82, and cysteine 162. Residues glutamine 283, tyrosine 312, aspartate 333, and aspartate 381 each contribute to the S-adenosyl-L-methionine site. The Nucleophile role is filled by cysteine 408.

The protein belongs to the class I-like SAM-binding methyltransferase superfamily. RNA M5U methyltransferase family.

This is an uncharacterized protein from Streptococcus pyogenes serotype M3 (strain ATCC BAA-595 / MGAS315).